The sequence spans 256 residues: PHD finger protein ALFIN-LIKE 4 (256 aa).

The segment at 149-195 (QSKTANGSSKNKSGSKPPKRPNSDSKPQKQVQAKYEEENGGRGNGGD) is disordered. Residues 154–164 (NGSSKNKSGSK) show a composition bias toward low complexity. A PHD-type zinc finger spans residues 200 to 252 (ETICGACGEAYANGEFWICCDICETWFHGKCVRITPAKAEHIKHYKCPGCSNK).

It belongs to the Alfin family. Interacts with H3K4me3 and to a lesser extent with H3K4me2.

The protein resides in the nucleus. In terms of biological role, histone-binding component that specifically recognizes H3 tails trimethylated on 'Lys-4' (H3K4me3), which mark transcription start sites of virtually all active genes. In Oryza sativa subsp. indica (Rice), this protein is PHD finger protein ALFIN-LIKE 4.